A 168-amino-acid chain; its full sequence is Crossover junction endodeoxyribonuclease RuvC (168 aa).

Residues Asp-8, Glu-68, and Asp-140 contribute to the active site. Residues Asp-8, Glu-68, and Asp-140 each coordinate Mg(2+).

The protein belongs to the RuvC family. In terms of assembly, homodimer which binds Holliday junction (HJ) DNA. The HJ becomes 2-fold symmetrical on binding to RuvC with unstacked arms; it has a different conformation from HJ DNA in complex with RuvA. In the full resolvosome a probable DNA-RuvA(4)-RuvB(12)-RuvC(2) complex forms which resolves the HJ. Mg(2+) is required as a cofactor.

It is found in the cytoplasm. It carries out the reaction Endonucleolytic cleavage at a junction such as a reciprocal single-stranded crossover between two homologous DNA duplexes (Holliday junction).. Its function is as follows. The RuvA-RuvB-RuvC complex processes Holliday junction (HJ) DNA during genetic recombination and DNA repair. Endonuclease that resolves HJ intermediates. Cleaves cruciform DNA by making single-stranded nicks across the HJ at symmetrical positions within the homologous arms, yielding a 5'-phosphate and a 3'-hydroxyl group; requires a central core of homology in the junction. The consensus cleavage sequence is 5'-(A/T)TT(C/G)-3'. Cleavage occurs on the 3'-side of the TT dinucleotide at the point of strand exchange. HJ branch migration catalyzed by RuvA-RuvB allows RuvC to scan DNA until it finds its consensus sequence, where it cleaves and resolves the cruciform DNA. This chain is Crossover junction endodeoxyribonuclease RuvC, found in Gluconobacter oxydans (strain 621H) (Gluconobacter suboxydans).